The following is a 300-amino-acid chain: uncharacterized protein (300 aa).

CBS domains lie at 10–68, 88–148, 152–207, and 226–284; these read RFPP…FRDV, FLKY…HVKV, MTSE…EDVL, and ISSK…GVEI.

This is an uncharacterized protein from Thermofilum pendens.